The primary structure comprises 244 residues: Na(+)-translocating NADH-quinone reductase subunit E (244 aa).

The next 6 helical transmembrane spans lie at 11 to 31 (LLGI…TFLG), 50 to 70 (MSVA…HYFI), 90 to 110 (FLEL…LEVL), 123 to 143 (GIFL…LFGI), 153 to 173 (VVFS…FATI), and 191 to 211 (ISFI…GIDI). The segment covering 222 to 236 (VTNIATDSPQPNTHS) has biased composition (polar residues). The segment at 222–244 (VTNIATDSPQPNTHSSSEEPKAS) is disordered.

This sequence belongs to the NqrDE/RnfAE family. In terms of assembly, composed of six subunits; NqrA, NqrB, NqrC, NqrD, NqrE and NqrF.

Its subcellular location is the cell inner membrane. It catalyses the reaction a ubiquinone + n Na(+)(in) + NADH + H(+) = a ubiquinol + n Na(+)(out) + NAD(+). NQR complex catalyzes the reduction of ubiquinone-1 to ubiquinol by two successive reactions, coupled with the transport of Na(+) ions from the cytoplasm to the periplasm. NqrA to NqrE are probably involved in the second step, the conversion of ubisemiquinone to ubiquinol. This chain is Na(+)-translocating NADH-quinone reductase subunit E, found in Chlamydia trachomatis serovar A (strain ATCC VR-571B / DSM 19440 / HAR-13).